Here is a 1074-residue protein sequence, read N- to C-terminus: DNA primase (1074 aa).

A CHC2-type zinc finger spans residues 1012–1052 (CVRFKHARARRASARSYLALNVDAHGRLCVCVIQQCFAAKC).

This sequence belongs to the herpesviridae DNA primase family. As to quaternary structure, associates with the helicase and the primase-associated factor to form the helicase-primase factor.

It is found in the host nucleus. Its function is as follows. Essential component of the helicase/primase complex. Unwinds the DNA at the replication forks and generates single-stranded DNA for both leading and lagging strand synthesis. The primase initiates primer synthesis and thereby produces large amount of short RNA primers on the lagging strand that the polymerase elongates using dNTPs. The sequence is that of DNA primase (MDV066) from Gallus gallus (Chicken).